The chain runs to 171 residues: Sigma intracellular receptor 2 (171 aa).

Over 1 to 6 (MAVCAR) the chain is Cytoplasmic. The helical transmembrane segment at 7–27 (LLEWIFFFYFFSHIPITLLVD) threads the bilayer. The EXPERA domain occupies 8-153 (LEWIFFFYFF…PYLLVPVLLL (146 aa)). Topologically, residues 28-66 (LQAVLPPSLYPQELLDLMKWYTVAFKDHLMANPPPWFKS) are lumenal. The helical transmembrane segment at 67-87 (FVYCEAILQLPFFPVAAYAFF) threads the bilayer. Cholesterol contacts are provided by I73 and Q75. Residues 88 to 97 (KGGCKWIRIP) are Cytoplasmic-facing. The helical transmembrane segment at 98-118 (AIVYSAHVATTVIAIIGHILF) threads the bilayer. Residues 119–137 (GEFPKSDVIAPLTQKDRLT) are Lumenal-facing. Residues 138–158 (LVSIYAPYLLVPVLLLLTMLF) traverse the membrane as a helical segment. At 159 to 171 (SPRYRQEEKRKRK) the chain is on the cytoplasmic side. The ER retention motif signature appears at 167–171 (KRKRK).

The protein belongs to the TMEM97/sigma-2 receptor family. Homodimer.

It localises to the rough endoplasmic reticulum membrane. The protein localises to the nucleus membrane. Its function is as follows. Sigma-2 receptor which contributes to ameliorate dysfunctional cellular processes and slow degenerative progression by regulating cell functions including cholesterol biosynthesis/trafficking, membrane trafficking, autophagy, lipid membrane-bound protein trafficking, and receptor stabilization at the cell surface. Forms a ternary complex with PGRMC1 receptor and low density lipoprotein receptor/LDLR at the plasma membrane, which increases LDLR-mediated LDL cholesterol internalization. Decreases lysosomal sterol transporter NPC1 availability to the cell, probably through NPC1-binding, hence controlling lipid transport, including cholesterol and LBPA, outside of late endosome/lysosome. Binds regio- and stereoselective ligand 20(S)-hydroxycholesterol (20(S)-OHC), thereby linking OHC binding to cholesterol homeostasis. Also able to bind cholesterol. Binds histatin 1 (Hst 1)/HN1 salivary peptide at the ER membrane, which is critical for increasing mitochondria-ER contacts and stimulating Hst1 wound healing properties. May alter the activity of some cytochrome P450 proteins. Although shows homologies with sterol isomerases (EXPERA domain), not able to catalyze sterol isomerization. However, may act as sensors of these molecules. Acts as a quality control factor in the ER, promoting the proteolytic degradation of nonproductive and extramitochondrial precursor proteins in the ER membrane thus removing them from the ER surface. This Xenopus tropicalis (Western clawed frog) protein is Sigma intracellular receptor 2 (tmem97).